A 498-amino-acid polypeptide reads, in one-letter code: Glycerol kinase (498 aa).

Thr-12 lines the ADP pocket. ATP is bound by residues Thr-12, Thr-13, and Ser-14. Thr-12 provides a ligand contact to sn-glycerol 3-phosphate. An ADP-binding site is contributed by Arg-16. Sn-glycerol 3-phosphate-binding residues include Arg-82, Glu-83, and Tyr-134. Glycerol contacts are provided by Arg-82, Glu-83, and Tyr-134. The residue at position 230 (His-230) is a Phosphohistidine; by HPr. Asp-244 is a binding site for sn-glycerol 3-phosphate. 2 residues coordinate glycerol: Asp-244 and Gln-245. Residues Thr-266 and Gly-309 each coordinate ADP. Residues Thr-266, Gly-309, Gln-313, and Gly-410 each contribute to the ATP site. The ADP site is built by Gly-410 and Asn-414.

The protein belongs to the FGGY kinase family. In terms of assembly, homotetramer and homodimer (in equilibrium). The phosphoenolpyruvate-dependent sugar phosphotransferase system (PTS), including enzyme I, and histidine-containing protein (HPr) are required for the phosphorylation, which leads to the activation of the enzyme.

The enzyme catalyses glycerol + ATP = sn-glycerol 3-phosphate + ADP + H(+). The protein operates within polyol metabolism; glycerol degradation via glycerol kinase pathway; sn-glycerol 3-phosphate from glycerol: step 1/1. Its activity is regulated as follows. Activated by phosphorylation and inhibited by fructose 1,6-bisphosphate (FBP). Its function is as follows. Key enzyme in the regulation of glycerol uptake and metabolism. Catalyzes the phosphorylation of glycerol to yield sn-glycerol 3-phosphate. The chain is Glycerol kinase from Staphylococcus aureus (strain MRSA252).